Consider the following 214-residue polypeptide: NADH-quinone oxidoreductase subunit C (214 aa).

The protein belongs to the complex I 30 kDa subunit family. As to quaternary structure, NDH-1 is composed of 14 different subunits. Subunits NuoB, C, D, E, F, and G constitute the peripheral sector of the complex.

Its subcellular location is the cell inner membrane. It catalyses the reaction a quinone + NADH + 5 H(+)(in) = a quinol + NAD(+) + 4 H(+)(out). NDH-1 shuttles electrons from NADH, via FMN and iron-sulfur (Fe-S) centers, to quinones in the respiratory chain. The immediate electron acceptor for the enzyme in this species is believed to be ubiquinone. Couples the redox reaction to proton translocation (for every two electrons transferred, four hydrogen ions are translocated across the cytoplasmic membrane), and thus conserves the redox energy in a proton gradient. This Caulobacter sp. (strain K31) protein is NADH-quinone oxidoreductase subunit C.